The chain runs to 328 residues: Renalase (328 aa).

Residues alanine 13, aspartate 32 to lysine 33, arginine 40, and glutamine 56 to tyrosine 57 contribute to the FAD site. Residues tyrosine 57–arginine 61 and serine 96–aspartate 98 contribute to the substrate site. Position 128 (isoleucine 128) interacts with FAD. Threonine 185 lines the substrate pocket. An FAD-binding site is contributed by aspartate 302. Residue arginine 308 participates in substrate binding. Valine 309 provides a ligand contact to FAD.

The protein belongs to the bacterial renalase family. The cofactor is FAD.

The catalysed reaction is 1,2-dihydro-beta-NAD + O2 + H(+) = H2O2 + NAD(+). The enzyme catalyses 1,2-dihydro-beta-NADP + O2 + H(+) = H2O2 + NADP(+). It carries out the reaction 1,6-dihydro-beta-NADP + O2 + H(+) = H2O2 + NADP(+). It catalyses the reaction 1,6-dihydro-beta-NAD + O2 + H(+) = H2O2 + NAD(+). In terms of biological role, catalyzes the oxidation of the 1,2-dihydro- and 1,6-dihydro- isomeric forms of beta-NAD(P) back to beta-NAD(P)+. Has a preference for 1,2-dihydro-beta-NAD as substrate. May serve to protect primary metabolism dehydrogenases from inhibition by the 1,2-dihydro- and 1,6-dihydro-beta-NAD(P) isomers. This is Renalase from Pseudomonas syringae pv. tomato (strain ATCC BAA-871 / DC3000).